Here is a 471-residue protein sequence, read N- to C-terminus: Plasmepsin VII (471 aa).

The first 24 residues, 1-24 (MKSVYHHFAIIFFLKLFLCNCILS), serve as a signal peptide directing secretion. One can recognise a Peptidase A1 domain in the interval 96–438 (YYGKIAIGEN…DKDNLQIGFV (343 aa)). Catalysis depends on residues aspartate 115 and aspartate 325.

It belongs to the peptidase A1 family.

The protein localises to the cytoplasm. The protein is Plasmepsin VII of Plasmodium berghei (strain Anka).